The chain runs to 813 residues: LPS-assembly protein LptD (813 aa).

Residues 1 to 22 form the signal peptide; sequence MRRALRLLPLPLSIAICLPAMA.

It belongs to the LptD family. Component of the lipopolysaccharide transport and assembly complex. Interacts with LptE and LptA.

It is found in the cell outer membrane. Functionally, together with LptE, is involved in the assembly of lipopolysaccharide (LPS) at the surface of the outer membrane. This is LPS-assembly protein LptD from Xanthomonas oryzae pv. oryzae (strain KACC10331 / KXO85).